A 553-amino-acid chain; its full sequence is Cytochrome P450 monooxygenase alnD (553 aa).

A helical transmembrane segment spans residues 351-371 (LVGAGFVTSSAFLSWLIYSLV). C493 lines the heme pocket. Residue N518 is glycosylated (N-linked (GlcNAc...) asparagine).

It belongs to the cytochrome P450 family. Requires heme as cofactor.

The protein localises to the membrane. It participates in polyketide biosynthesis. Cytochrome P450 monooxygenase; part of the gene cluster that mediates the biosynthesis of asperlin, a polyketide showing anti-inflammatory, antitumor and antibiotic activities. The first step of the asperlin biosynthesis is the production of the intermediate 2,4,6-octatrienoic acid by the highly redusing polyketide synthase alnA with cleavage of the PKS product by the esterase alnB. 2,4,6-octatrienoic acid is further converted to asperlin via several steps involving the remaining enzymes from the cluster. The polypeptide is Cytochrome P450 monooxygenase alnD (Emericella nidulans (strain FGSC A4 / ATCC 38163 / CBS 112.46 / NRRL 194 / M139) (Aspergillus nidulans)).